A 264-amino-acid chain; its full sequence is Acyl-[acyl-carrier-protein]--UDP-N-acetylglucosamine O-acyltransferase (264 aa).

The protein belongs to the transferase hexapeptide repeat family. LpxA subfamily. In terms of assembly, homotrimer.

It localises to the cytoplasm. The catalysed reaction is a (3R)-hydroxyacyl-[ACP] + UDP-N-acetyl-alpha-D-glucosamine = a UDP-3-O-[(3R)-3-hydroxyacyl]-N-acetyl-alpha-D-glucosamine + holo-[ACP]. It functions in the pathway glycolipid biosynthesis; lipid IV(A) biosynthesis; lipid IV(A) from (3R)-3-hydroxytetradecanoyl-[acyl-carrier-protein] and UDP-N-acetyl-alpha-D-glucosamine: step 1/6. Its function is as follows. Involved in the biosynthesis of lipid A, a phosphorylated glycolipid that anchors the lipopolysaccharide to the outer membrane of the cell. The polypeptide is Acyl-[acyl-carrier-protein]--UDP-N-acetylglucosamine O-acyltransferase (Rickettsia felis (strain ATCC VR-1525 / URRWXCal2) (Rickettsia azadi)).